The primary structure comprises 245 residues: Platelet-derived growth factor subunit B (245 aa).

The signal sequence occupies residues 1-20 (MNRCWALFLSLCCYLRLVSA). The propeptide at 21 to 81 (EGDPIPEELY…ELESLSRGRR (61 aa)) is removed in mature form. Asn63 carries an N-linked (GlcNAc...) asparagine glycan. 3 cysteine pairs are disulfide-bonded: Cys101–Cys145, Cys134–Cys182, and Cys138–Cys184. Residues 195–245 (RSPGSSQEQRARTPQTRVTIRTVRVRRPPKGKHQKFKHTHDKKALKETLGA) constitute a propeptide, removed in mature form. Residues 220–235 (RRPPKGKHQKFKHTHD) are compositionally biased toward basic residues. The segment at 220–245 (RRPPKGKHQKFKHTHDKKALKETLGA) is disordered. Residues 236-245 (KKALKETLGA) show a composition bias toward basic and acidic residues.

The protein belongs to the PDGF/VEGF growth factor family. As to quaternary structure, antiparallel homodimer; disulfide-linked. Antiparallel heterodimer with PDGFA; disulfide-linked. The PDGFB homodimer interacts with PDGFRA and PDGFRB homodimers, and with heterodimers formed by PDGFRA and PDGFRB. The heterodimer composed of PDGFA and PDGFB interacts with PDGFRB homodimers, and with heterodimers formed by PDGFRA and PDGFRB. Interacts with XLKD1. Interacts with LRP1. Interacts with SORL1 (via the N-terminal ectodomain). Interacts with CD82; this interaction inhibits PDGFB-mediated signaling pathway.

It localises to the secreted. Growth factor that plays an essential role in the regulation of embryonic development, cell proliferation, cell migration, survival and chemotaxis. Potent mitogen for cells of mesenchymal origin. Required for normal proliferation and recruitment of pericytes and vascular smooth muscle cells in the central nervous system, skin, lung, heart and placenta. Required for normal blood vessel development, and for normal development of kidney glomeruli. Plays an important role in wound healing. Signaling is modulated by the formation of heterodimers with PDGFA. This Felis catus (Cat) protein is Platelet-derived growth factor subunit B (PDGFB).